A 349-amino-acid polypeptide reads, in one-letter code: Methylthioribose-1-phosphate isomerase (349 aa).

Substrate is bound by residues 51–53, arginine 94, and glutamine 199; that span reads RGA. Residue aspartate 240 is the Proton donor of the active site. 250–251 serves as a coordination point for substrate; sequence NK.

It belongs to the EIF-2B alpha/beta/delta subunits family. MtnA subfamily. In terms of assembly, homodimer.

The enzyme catalyses 5-(methylsulfanyl)-alpha-D-ribose 1-phosphate = 5-(methylsulfanyl)-D-ribulose 1-phosphate. It functions in the pathway amino-acid biosynthesis; L-methionine biosynthesis via salvage pathway; L-methionine from S-methyl-5-thio-alpha-D-ribose 1-phosphate: step 1/6. Functionally, catalyzes the interconversion of methylthioribose-1-phosphate (MTR-1-P) into methylthioribulose-1-phosphate (MTRu-1-P). This is Methylthioribose-1-phosphate isomerase from Bacillus mycoides (strain KBAB4) (Bacillus weihenstephanensis).